The primary structure comprises 942 residues: Chitin synthase 4 (942 aa).

Residues 1-124 (MPPRYPFGGG…FDEHDGDVPL (124 aa)) form a disordered region. Residues 14 to 26 (DEAHHQPLERRTT) are compositionally biased toward basic and acidic residues. Polar residues predominate over residues 27–36 (AEAQGNSFTH). N-linked (GlcNAc...) asparagine glycosylation occurs at asparagine 604. A run of 7 helical transmembrane segments spans residues 641 to 661 (TIQL…FFIL), 674 to 694 (VPNL…FLLS), 709 to 729 (AMVV…YLAV), 755 to 775 (IVIS…MFLE), 783 to 803 (IVQY…YAFA), 885 to 905 (VLCW…ISSI), and 909 to 929 (TIYM…RMMG).

The protein belongs to the chitin synthase family. Class I subfamily.

It localises to the cell membrane. The protein resides in the cytoplasmic vesicle membrane. The catalysed reaction is [(1-&gt;4)-N-acetyl-beta-D-glucosaminyl](n) + UDP-N-acetyl-alpha-D-glucosamine = [(1-&gt;4)-N-acetyl-beta-D-glucosaminyl](n+1) + UDP + H(+). In terms of biological role, polymerizes chitin, a structural polymer of the cell wall and septum, by transferring the sugar moiety of UDP-GlcNAc to the non-reducing end of the growing chitin polymer. The chain is Chitin synthase 4 from Mycosarcoma maydis (Corn smut fungus).